A 104-amino-acid chain; its full sequence is ATP-dependent Clp protease adapter protein ClpS (104 aa).

This sequence belongs to the ClpS family. In terms of assembly, binds to the N-terminal domain of the chaperone ClpA.

Involved in the modulation of the specificity of the ClpAP-mediated ATP-dependent protein degradation. The protein is ATP-dependent Clp protease adapter protein ClpS of Neisseria gonorrhoeae (strain ATCC 700825 / FA 1090).